The primary structure comprises 894 residues: Alanine--tRNA ligase (894 aa).

Residues H587, H591, C691, and H695 each coordinate Zn(2+). A disordered region spans residues 739-758 (AEGDRAAEEAKGRLQEERDA).

Belongs to the class-II aminoacyl-tRNA synthetase family. Requires Zn(2+) as cofactor.

Its subcellular location is the cytoplasm. The catalysed reaction is tRNA(Ala) + L-alanine + ATP = L-alanyl-tRNA(Ala) + AMP + diphosphate. In terms of biological role, catalyzes the attachment of alanine to tRNA(Ala) in a two-step reaction: alanine is first activated by ATP to form Ala-AMP and then transferred to the acceptor end of tRNA(Ala). Also edits incorrectly charged Ser-tRNA(Ala) and Gly-tRNA(Ala) via its editing domain. The polypeptide is Alanine--tRNA ligase (Cenarchaeum symbiosum (strain A)).